Here is a 37-residue protein sequence, read N- to C-terminus: Cytochrome b6-f complex subunit 7 (37 aa).

Residues 11–29 (AVILMVLVLFGLAWGFLIL) form a helical membrane-spanning segment.

It belongs to the PetM family. The 4 large subunits of the cytochrome b6-f complex are cytochrome b6, subunit IV (17 kDa polypeptide, PetD), cytochrome f and the Rieske protein, while the 4 small subunits are PetG, PetL, PetM and PetN. The complex functions as a dimer.

It is found in the cellular thylakoid membrane. In terms of biological role, component of the cytochrome b6-f complex, which mediates electron transfer between photosystem II (PSII) and photosystem I (PSI), cyclic electron flow around PSI, and state transitions. This Crocosphaera subtropica (strain ATCC 51142 / BH68) (Cyanothece sp. (strain ATCC 51142)) protein is Cytochrome b6-f complex subunit 7.